We begin with the raw amino-acid sequence, 253 residues long: Small ribosomal subunit protein uS3 (253 aa).

In terms of domain architecture, KH type-2 spans 38–106; that stretch reads IRKYIHARLS…EVQINIFEIK (69 aa). The tract at residues 216–253 is disordered; that stretch reads AGMDKKQAGQGGGKGGDSPRGDRKPFNKGGKPDARKRK. Residues 232–253 are compositionally biased toward basic and acidic residues; that stretch reads DSPRGDRKPFNKGGKPDARKRK.

Belongs to the universal ribosomal protein uS3 family. In terms of assembly, part of the 30S ribosomal subunit. Forms a tight complex with proteins S10 and S14.

Binds the lower part of the 30S subunit head. Binds mRNA in the 70S ribosome, positioning it for translation. The polypeptide is Small ribosomal subunit protein uS3 (Flavobacterium psychrophilum (strain ATCC 49511 / DSM 21280 / CIP 103535 / JIP02/86)).